The following is a 1047-amino-acid chain: UPF0182 protein Mlut_14990 (1047 aa).

2 stretches are compositionally biased toward gly residues: residues 1-27 (MSFG…GQSG) and 49-59 (GPGGPFGGGGS). The tract at residues 1-66 (MSFGQGGGGP…GGSSAARGRG (66 aa)) is disordered. 7 helical membrane-spanning segments follow: residues 71-91 (PSAL…FVVF), 114-134 (VLAK…AVWL), 168-188 (LVFL…AMNG), 214-234 (FFMA…SVVL), 266-286 (AHIG…FWLN), 314-334 (AILA…VVSG), and 341-361 (IGTA…PFIV). Disordered regions lie at residues 544–568 (GAPA…TFSG), 941–965 (GDSG…PTAP), and 1007–1047 (EALK…TPSG). Over residues 555-565 (TADSQEDTAYT) the composition is skewed to polar residues. Positions 1015–1037 (ADDALGGDAPAQEQAPAEASPAP) are enriched in low complexity. The segment covering 1038 to 1047 (SSSPSPTPSG) has biased composition (pro residues).

It belongs to the UPF0182 family.

It is found in the cell membrane. This chain is UPF0182 protein Mlut_14990, found in Micrococcus luteus (strain ATCC 4698 / DSM 20030 / JCM 1464 / CCM 169 / CCUG 5858 / IAM 1056 / NBRC 3333 / NCIMB 9278 / NCTC 2665 / VKM Ac-2230) (Micrococcus lysodeikticus).